The chain runs to 25 residues: Caerin-2.3 (25 aa).

In terms of tissue distribution, expressed by the skin parotoid and/or rostral glands.

Its subcellular location is the secreted. In terms of biological role, acts as a male sex pheromone that attracts females. Has no antimicrobial activity. The protein is Caerin-2.3 of Ranoidea caerulea (Green tree frog).